The primary structure comprises 382 residues: MASDINRRRSFSLLVLIIVMLYGHKGDSKCDFEAIFNFGDSNSDTGGFWAAFPAQSGPWGMTYFKKPAGRASDGRLIIDFLAKSLGMPFLSPYLQSIGSDFRHGANFATLASTVLLPNTSLFVSGISPFSLAIQLNQMKQFKVNVDESHSLDRPGLKILPSKIVFGKSLYTFYIGQNDFTSNLASIGVERVKLYLPQVIGQIAGTIKEIYGIGGRTFLVLNLAPVGCYPAILTGYTHTDADLDKYGCLIPVNKAVKYYNTLLNKTLSQTRTELKNATVIYLDTHKILLDLFQHPKSYGMKHGIKACCGYGGRPYNFNQKLFCGNTKVIGNFSTTAKACHDPHNYVSWDGIHATEAANHHISMAILDGSISYPPFILNNLCSP.

Residues 1–28 form the signal peptide; sequence MASDINRRRSFSLLVLIIVMLYGHKGDS. The active-site Nucleophile is serine 41. Asparagine 118, asparagine 263, asparagine 275, and asparagine 330 each carry an N-linked (GlcNAc...) asparagine glycan. Residues aspartate 348 and histidine 351 contribute to the active site.

The protein belongs to the 'GDSL' lipolytic enzyme family.

The protein localises to the secreted. This chain is GDSL esterase/lipase At4g01130, found in Arabidopsis thaliana (Mouse-ear cress).